Reading from the N-terminus, the 45-residue chain is Large ribosomal subunit protein bL36 (45 aa).

The protein belongs to the bacterial ribosomal protein bL36 family.

This Aliivibrio salmonicida (strain LFI1238) (Vibrio salmonicida (strain LFI1238)) protein is Large ribosomal subunit protein bL36.